We begin with the raw amino-acid sequence, 1238 residues long: Cullin-associated NEDD8-dissociated protein 1 (1238 aa).

HEAT repeat units lie at residues 41–78, 126–167, 171–208, 210–247, and 251–292; these read TYEN…RVKD, LVIK…KYGS, GDLE…PSPD, LFNS…SSGY, and KYLP…KCQK. The segment at 315–354 is disordered; it reads YSDDGEGEEDGDEEEEEMETSGDNDEEQEEEEEEEDLSDD. 9 HEAT repeats span residues 382–419, 432–469, 603–641, 646–683, 688–725, 853–890, 933–966, 967–1004, and 1008–1045; these read ELYQ…QLNK, QQVP…IIPG, EIQS…SSIN, SILP…VCPN, SLLT…NYSE, HENE…CSLQ, PFLQ…KLSM, IEPN…ENKE, and QYLA…NKPN.

This sequence belongs to the CAND family.

It localises to the nucleus. Key assembly factor of SCF (SKP1-CUL1-F-box protein) E3 ubiquitin ligase complexes that promotes the exchange of the substrate-recognition F-box subunit in SCF complexes, thereby playing a key role in the cellular repertoire of SCF complexes. Acts as a F-box protein exchange factor. This Dictyostelium discoideum (Social amoeba) protein is Cullin-associated NEDD8-dissociated protein 1 (cand1).